Reading from the N-terminus, the 467-residue chain is Congo red hypersensitive protein 2 (467 aa).

An N-terminal signal peptide occupies residues 1 to 23 (MAIVNSWLICLVSIFSFVVRVEA). Asparagine 28 carries N-linked (GlcNAc...) asparagine glycosylation. A disulfide bridge connects residues cysteine 56 and cysteine 67. In terms of domain architecture, GH16 spans 63 to 280 (SHDSCMPVPI…WSGGEINWDA (218 aa)). N-linked (GlcNAc...) asparagine glycosylation occurs at asparagine 96. Glutamate 166 serves as the catalytic Nucleophile. The Proton donor role is filled by glutamate 170. Glutamate 170 contributes to the chitin binding site. N-linked (GlcNAc...) asparagine glycosylation is found at asparagine 190, asparagine 196, asparagine 233, and asparagine 237. A chitin-binding site is contributed by tryptophan 257. The N-linked (GlcNAc...) asparagine glycan is linked to asparagine 261. A chitin-binding site is contributed by threonine 268. 2 N-linked (GlcNAc...) asparagine glycosylation sites follow: asparagine 297 and asparagine 310. The segment at 337 to 444 (MDSDEGSGLD…SSSTSSMSGN (108 aa)) is disordered. Over residues 351-444 (ATTSSTQKSS…SSSTSSMSGN (94 aa)) the composition is skewed to low complexity. Asparagine 445 carries the GPI-anchor amidated asparagine lipid modification. Residues 446–467 (AGANVAANWRLTVLCVILGYVL) constitute a propeptide, removed in mature form.

The protein belongs to the glycosyl hydrolase 16 family. CRH1 subfamily. The GPI-anchor is attached to the protein in the endoplasmic reticulum and serves to target the protein to the cell surface. There, the glucosamine-inositol phospholipid moiety is cleaved off and the GPI-modified mannoprotein is covalently attached via its lipidless GPI glycan remnant to the 1,6-beta-glucan of the outer cell wall layer.

It is found in the secreted. Its subcellular location is the cell wall. The protein resides in the membrane. The catalysed reaction is Random endo-hydrolysis of N-acetyl-beta-D-glucosaminide (1-&gt;4)-beta-linkages in chitin and chitodextrins.. Functionally, dual chitinase/transglycosylase that plays a role in cell wall architecture. Chitinase and transglycosylase activities are coupled. Required for the polysaccharide cross-linking at the septa and the cell wall. More specifically, transfers chitin to both beta(1-3)- and beta(1-6)glucan in the cell wall. The minimal number of intact hexopyranose units required in the molecule of the acceptor oligosaccharide is two and the effectivity of the acceptor increased with the increasing length of its oligosaccharide chain. The sequence is that of Congo red hypersensitive protein 2 from Saccharomyces cerevisiae (strain ATCC 204508 / S288c) (Baker's yeast).